Consider the following 186-residue polypeptide: Elongation factor P (186 aa).

This sequence belongs to the elongation factor P family.

The protein resides in the cytoplasm. It participates in protein biosynthesis; polypeptide chain elongation. Involved in peptide bond synthesis. Stimulates efficient translation and peptide-bond synthesis on native or reconstituted 70S ribosomes in vitro. Probably functions indirectly by altering the affinity of the ribosome for aminoacyl-tRNA, thus increasing their reactivity as acceptors for peptidyl transferase. This is Elongation factor P from Mycoplasmopsis synoviae (strain 53) (Mycoplasma synoviae).